The primary structure comprises 657 residues: Conserved oligomeric Golgi complex subunit 6 (657 aa).

This sequence belongs to the COG6 family. Component of the conserved oligomeric Golgi complex which is composed of eight different subunits and is required for normal Golgi morphology and localization.

Its subcellular location is the golgi apparatus membrane. Functionally, required for normal Golgi function. This is Conserved oligomeric Golgi complex subunit 6 (COG6) from Homo sapiens (Human).